We begin with the raw amino-acid sequence, 338 residues long: MSPVATESMYKPTTINQTAHQQAMDPLKSKQQSNATVNKPAFKPEPAVNLTPIKFAPIKEHQVQRAMVRRYFQDMEERAISDVIIVGAGSAGLSCAYALGTARPDLKITILESNVAPGGGCWLGGQLMSAMVCRKPADEFLDQVGVPYEDEGNFVVVKHAALFTSTVLSKVLAMPNVKMFNATACEDLIIKPCPINPGVQRIAGCVTNWTLVSLNHDHQSCMDPSTITAPLVCSFAGHDGPFGAFCVKRVASAGLSEGLGDMRPLDMERAEDHIANKTREILPGLIVGGMELSEFDGSARMGPTFGAMLLSGKRAAEVALQSLDRVKIEEGEVVGLAK.

Residues 1-43 (MSPVATESMYKPTTINQTAHQQAMDPLKSKQQSNATVNKPAFK) form a disordered region. Positions 11–21 (KPTTINQTAHQ) are enriched in polar residues. Residues alanine 91, 112-113 (ES), glycine 120, and cysteine 185 contribute to the substrate site. Cysteine 221 bears the 2,3-didehydroalanine (Cys) mark. Substrate is bound by residues aspartate 223, histidine 238, methionine 290, and 300-302 (RMG).

The protein belongs to the THI4 family. As to quaternary structure, homooctamer. Fe cation serves as cofactor. In terms of processing, during the catalytic reaction, a sulfide is transferred from Cys-221 to a reaction intermediate, generating a dehydroalanine residue. Highly expressed in haustoria, and only in low amounts in intercellular hyphae. Found in the basal hyphae of the uredia, but not in the pedicels and only at very low levels in uredospores.

Its subcellular location is the cytoplasm. It is found in the nucleus. It catalyses the reaction [ADP-thiazole synthase]-L-cysteine + glycine + NAD(+) = [ADP-thiazole synthase]-dehydroalanine + ADP-5-ethyl-4-methylthiazole-2-carboxylate + nicotinamide + 3 H2O + 2 H(+). Involved in biosynthesis of the thiamine precursor thiazole. Catalyzes the conversion of NAD and glycine to adenosine diphosphate 5-(2-hydroxyethyl)-4-methylthiazole-2-carboxylic acid (ADT), an adenylated thiazole intermediate. The reaction includes an iron-dependent sulfide transfer from a conserved cysteine residue of the protein to a thiazole intermediate. The enzyme can only undergo a single turnover, which suggests it is a suicide enzyme. May have additional roles in adaptation to various stress conditions and in DNA damage tolerance. In Uromyces fabae (Rust fungus), this protein is Thiamine thiazole synthase (THI2).